The following is a 188-amino-acid chain: Photosystem I assembly protein Ycf4 (188 aa).

A run of 2 helical transmembrane segments spans residues I26–S46 and L70–L90.

It belongs to the Ycf4 family.

It is found in the cellular thylakoid membrane. In terms of biological role, seems to be required for the assembly of the photosystem I complex. This is Photosystem I assembly protein Ycf4 from Rippkaea orientalis (strain PCC 8801 / RF-1) (Cyanothece sp. (strain PCC 8801)).